A 335-amino-acid chain; its full sequence is Glycerol-3-phosphate dehydrogenase [NAD(P)+] (335 aa).

NADPH is bound by residues Ser15, Tyr16, His36, and Lys110. Residues Lys110, Gly139, and Thr141 each contribute to the sn-glycerol 3-phosphate site. An NADPH-binding site is contributed by Ala143. Lys195, Asp248, Ser258, Arg259, and Asn260 together coordinate sn-glycerol 3-phosphate. Residue Lys195 is the Proton acceptor of the active site. Arg259 serves as a coordination point for NADPH. Residues Val283 and Glu285 each contribute to the NADPH site.

It belongs to the NAD-dependent glycerol-3-phosphate dehydrogenase family.

The protein localises to the cytoplasm. It carries out the reaction sn-glycerol 3-phosphate + NAD(+) = dihydroxyacetone phosphate + NADH + H(+). It catalyses the reaction sn-glycerol 3-phosphate + NADP(+) = dihydroxyacetone phosphate + NADPH + H(+). It participates in membrane lipid metabolism; glycerophospholipid metabolism. Catalyzes the reduction of the glycolytic intermediate dihydroxyacetone phosphate (DHAP) to sn-glycerol 3-phosphate (G3P), the key precursor for phospholipid synthesis. The chain is Glycerol-3-phosphate dehydrogenase [NAD(P)+] from Haemophilus influenzae (strain ATCC 51907 / DSM 11121 / KW20 / Rd).